The chain runs to 361 residues: Protein-glutamate methylesterase/protein-glutamine glutaminase 1 (361 aa).

The 118-residue stretch at 10–127 (KVLVVDDSAL…REGIEEKAQE (118 aa)) folds into the Response regulatory domain. 4-aspartylphosphate is present on D61. The region spanning 167–359 (FATTDKLIAV…ASVKRWYAEN (193 aa)) is the CheB-type methylesterase domain. Active-site residues include S179, H205, and D301.

Belongs to the CheB family. Post-translationally, phosphorylated by CheA. Phosphorylation of the N-terminal regulatory domain activates the methylesterase activity.

The protein localises to the cytoplasm. It catalyses the reaction [protein]-L-glutamate 5-O-methyl ester + H2O = L-glutamyl-[protein] + methanol + H(+). The catalysed reaction is L-glutaminyl-[protein] + H2O = L-glutamyl-[protein] + NH4(+). Its function is as follows. Involved in chemotaxis. Part of a chemotaxis signal transduction system that modulates chemotaxis in response to various stimuli. Catalyzes the demethylation of specific methylglutamate residues introduced into the chemoreceptors (methyl-accepting chemotaxis proteins or MCP) by CheR. Also mediates the irreversible deamidation of specific glutamine residues to glutamic acid. The protein is Protein-glutamate methylesterase/protein-glutamine glutaminase 1 of Hahella chejuensis (strain KCTC 2396).